Reading from the N-terminus, the 316-residue chain is 4-hydroxy-3-methylbut-2-enyl diphosphate reductase (316 aa).

Position 12 (C12) interacts with [4Fe-4S] cluster. Residues H41 and H74 each coordinate (2E)-4-hydroxy-3-methylbut-2-enyl diphosphate. The dimethylallyl diphosphate site is built by H41 and H74. Isopentenyl diphosphate contacts are provided by H41 and H74. C96 lines the [4Fe-4S] cluster pocket. H124 is a (2E)-4-hydroxy-3-methylbut-2-enyl diphosphate binding site. H124 lines the dimethylallyl diphosphate pocket. H124 contributes to the isopentenyl diphosphate binding site. E126 (proton donor) is an active-site residue. Residue T169 coordinates (2E)-4-hydroxy-3-methylbut-2-enyl diphosphate. C199 contributes to the [4Fe-4S] cluster binding site. 4 residues coordinate (2E)-4-hydroxy-3-methylbut-2-enyl diphosphate: S227, S228, N229, and S271. Residues S227, S228, N229, and S271 each contribute to the dimethylallyl diphosphate site. Residues S227, S228, N229, and S271 each coordinate isopentenyl diphosphate.

Belongs to the IspH family. [4Fe-4S] cluster serves as cofactor.

It catalyses the reaction isopentenyl diphosphate + 2 oxidized [2Fe-2S]-[ferredoxin] + H2O = (2E)-4-hydroxy-3-methylbut-2-enyl diphosphate + 2 reduced [2Fe-2S]-[ferredoxin] + 2 H(+). The enzyme catalyses dimethylallyl diphosphate + 2 oxidized [2Fe-2S]-[ferredoxin] + H2O = (2E)-4-hydroxy-3-methylbut-2-enyl diphosphate + 2 reduced [2Fe-2S]-[ferredoxin] + 2 H(+). It functions in the pathway isoprenoid biosynthesis; dimethylallyl diphosphate biosynthesis; dimethylallyl diphosphate from (2E)-4-hydroxy-3-methylbutenyl diphosphate: step 1/1. Its pathway is isoprenoid biosynthesis; isopentenyl diphosphate biosynthesis via DXP pathway; isopentenyl diphosphate from 1-deoxy-D-xylulose 5-phosphate: step 6/6. Its function is as follows. Catalyzes the conversion of 1-hydroxy-2-methyl-2-(E)-butenyl 4-diphosphate (HMBPP) into a mixture of isopentenyl diphosphate (IPP) and dimethylallyl diphosphate (DMAPP). Acts in the terminal step of the DOXP/MEP pathway for isoprenoid precursor biosynthesis. The polypeptide is 4-hydroxy-3-methylbut-2-enyl diphosphate reductase (Xanthomonas axonopodis pv. citri (strain 306)).